The chain runs to 815 residues: Probable inorganic carbon transporter subunit DabA (815 aa).

Positions 334, 336, 507, and 522 each coordinate Zn(2+).

Belongs to the inorganic carbon transporter (TC 9.A.2) DabA family. As to quaternary structure, forms a complex with DabB. The cofactor is Zn(2+).

The protein localises to the cell inner membrane. Functionally, part of an energy-coupled inorganic carbon pump. In Ectopseudomonas mendocina (strain ymp) (Pseudomonas mendocina), this protein is Probable inorganic carbon transporter subunit DabA.